A 359-amino-acid polypeptide reads, in one-letter code: Ribosomal RNA large subunit methyltransferase M (359 aa).

S-adenosyl-L-methionine contacts are provided by residues serine 186, 219–222 (CPGG), aspartate 238, aspartate 258, and aspartate 275. Catalysis depends on lysine 304, which acts as the Proton acceptor.

The protein belongs to the class I-like SAM-binding methyltransferase superfamily. RNA methyltransferase RlmE family. RlmM subfamily. As to quaternary structure, monomer.

It is found in the cytoplasm. The enzyme catalyses cytidine(2498) in 23S rRNA + S-adenosyl-L-methionine = 2'-O-methylcytidine(2498) in 23S rRNA + S-adenosyl-L-homocysteine + H(+). Catalyzes the 2'-O-methylation at nucleotide C2498 in 23S rRNA. The protein is Ribosomal RNA large subunit methyltransferase M of Vibrio parahaemolyticus serotype O3:K6 (strain RIMD 2210633).